A 200-amino-acid polypeptide reads, in one-letter code: Fibrillarin-like rRNA/tRNA 2'-O-methyltransferase (200 aa).

Residues 62–63, 78–79, 103–104, and 123–126 contribute to the S-adenosyl-L-methionine site; these read TT, EF, DA, and DVAQ.

The protein belongs to the methyltransferase superfamily. Fibrillarin family. Interacts with nop5. Component of box C/D small ribonucleoprotein (sRNP) particles that contain rpl7ae, FlpA and nop5, plus a guide RNA.

In terms of biological role, involved in pre-rRNA and tRNA processing. Utilizes the methyl donor S-adenosyl-L-methionine to catalyze the site-specific 2'-hydroxyl methylation of ribose moieties in rRNA and tRNA. Site specificity is provided by a guide RNA that base pairs with the substrate. Methylation occurs at a characteristic distance from the sequence involved in base pairing with the guide RNA. This chain is Fibrillarin-like rRNA/tRNA 2'-O-methyltransferase, found in Methanoculleus marisnigri (strain ATCC 35101 / DSM 1498 / JR1).